The following is a 183-amino-acid chain: Ribosome rescue factor SmrB (183 aa).

Positions 98-173 (LDLHGLTQLQ…GDAALLVLIE (76 aa)) constitute a Smr domain.

Belongs to the SmrB family. As to quaternary structure, associates with collided ribosomes, but not with correctly translating polysomes.

Acts as a ribosome collision sensor. Detects stalled/collided disomes (pairs of ribosomes where the leading ribosome is stalled and a second ribosome has collided with it) and endonucleolytically cleaves mRNA at the 5' boundary of the stalled ribosome. Stalled/collided disomes form a new interface (primarily via the 30S subunits) that binds SmrB. Cleaved mRNA becomes available for tmRNA ligation, leading to ribosomal subunit dissociation and rescue of stalled ribosomes. The polypeptide is Ribosome rescue factor SmrB (Salmonella paratyphi A (strain ATCC 9150 / SARB42)).